Here is a 212-residue protein sequence, read N- to C-terminus: Thaumatin-like protein 1b (212 aa).

Intrachain disulfides connect Cys-47–Cys-57, Cys-62–Cys-69, Cys-117–Cys-200, Cys-122–Cys-183, Cys-130–Cys-146, Cys-150–Cys-159, and Cys-160–Cys-170.

The protein belongs to the thaumatin family.

Its subcellular location is the secreted. The chain is Thaumatin-like protein 1b from Malus domestica (Apple).